The sequence spans 511 residues: Maturase K (511 aa).

This sequence belongs to the intron maturase 2 family. MatK subfamily.

The protein resides in the plastid. Functionally, usually encoded in the trnK tRNA gene intron. Probably assists in splicing its own and other chloroplast group II introns. This Lathraea clandestina (Purple toothwort) protein is Maturase K.